Here is a 426-residue protein sequence, read N- to C-terminus: Tyrosine--tRNA ligase (426 aa).

Tyrosine 38 serves as a coordination point for L-tyrosine. A 'HIGH' region motif is present at residues 43-52; the sequence is PTADSLHIGS. L-tyrosine contacts are provided by tyrosine 176 and glutamine 180. Residues 236–240 carry the 'KMSKS' region motif; it reads KFGKT. An ATP-binding site is contributed by lysine 239. The S4 RNA-binding domain maps to 359–426; sequence QTIVEVLTQS…KKLFNLYIWK (68 aa).

Belongs to the class-I aminoacyl-tRNA synthetase family. TyrS type 1 subfamily. Homodimer.

The protein resides in the cytoplasm. It carries out the reaction tRNA(Tyr) + L-tyrosine + ATP = L-tyrosyl-tRNA(Tyr) + AMP + diphosphate + H(+). Functionally, catalyzes the attachment of tyrosine to tRNA(Tyr) in a two-step reaction: tyrosine is first activated by ATP to form Tyr-AMP and then transferred to the acceptor end of tRNA(Tyr). The protein is Tyrosine--tRNA ligase of Aliivibrio fischeri (strain ATCC 700601 / ES114) (Vibrio fischeri).